A 566-amino-acid chain; its full sequence is Proline--tRNA ligase 1 (566 aa).

This sequence belongs to the class-II aminoacyl-tRNA synthetase family. ProS type 1 subfamily. In terms of assembly, homodimer.

Its subcellular location is the cytoplasm. It catalyses the reaction tRNA(Pro) + L-proline + ATP = L-prolyl-tRNA(Pro) + AMP + diphosphate. Catalyzes the attachment of proline to tRNA(Pro) in a two-step reaction: proline is first activated by ATP to form Pro-AMP and then transferred to the acceptor end of tRNA(Pro). As ProRS can inadvertently accommodate and process non-cognate amino acids such as alanine and cysteine, to avoid such errors it has two additional distinct editing activities against alanine. One activity is designated as 'pretransfer' editing and involves the tRNA(Pro)-independent hydrolysis of activated Ala-AMP. The other activity is designated 'posttransfer' editing and involves deacylation of mischarged Ala-tRNA(Pro). The misacylated Cys-tRNA(Pro) is not edited by ProRS. This is Proline--tRNA ligase 1 from Bacillus cereus (strain ZK / E33L).